A 509-amino-acid chain; its full sequence is Dihydrolipoyl dehydrogenase, mitochondrial (509 aa).

A mitochondrion-targeting transit peptide spans 1 to 35 (MQSWSRVYCSLVKRGHFSRISHGLQGVSVVPLRTY). Lys66 is modified (N6-acetyllysine; alternate). Lys66 bears the N6-succinyllysine; alternate mark. Residues 71-80 (EKNETLGGTC) and Lys89 each bind FAD. Cys80 and Cys85 are joined by a disulfide. 4 positions are modified to N6-acetyllysine; alternate: Lys104, Lys122, Lys132, and Lys143. 4 positions are modified to N6-succinyllysine; alternate: Lys104, Lys122, Lys132, and Lys143. Gly154 contributes to the FAD binding site. 2 positions are modified to N6-succinyllysine: Lys159 and Lys166. Residue 183–185 (TGS) participates in FAD binding. Residues 220 to 227 (GAGVIGVE) and Glu243 contribute to the NAD(+) site. N6-succinyllysine is present on residues Lys273 and Lys277. Val278 is a binding site for NAD(+). Phosphoserine occurs at positions 285 and 297. Gly314 is a binding site for NAD(+). Lys346 is subject to N6-acetyllysine. FAD-binding positions include Asp355 and 361-364 (MLAH). Lys410 carries the N6-acetyllysine; alternate modification. At Lys410 the chain carries N6-succinyllysine; alternate. N6-acetyllysine occurs at positions 417 and 420. At Lys430 the chain carries N6-succinyllysine. His487 functions as the Proton acceptor in the catalytic mechanism. Lys505 carries the N6-acetyllysine; alternate modification. An N6-succinyllysine; alternate modification is found at Lys505.

The protein belongs to the class-I pyridine nucleotide-disulfide oxidoreductase family. In terms of assembly, homodimer. Part of the multimeric pyruvate dehydrogenase complex that contains multiple copies of pyruvate dehydrogenase (subunits PDHA (PDHA1 or PDHA2) and PDHB, E1), dihydrolipoamide acetyltransferase (DLAT, E2) and lipoamide dehydrogenase (DLD, E3). These subunits are bound to an inner core composed of about 48 DLAT and 12 PDHX molecules (by non covalent bonds). The 2-oxoglutarate dehydrogenase complex is composed of OGDH (2-oxoglutarate dehydrogenase; E1), DLST (dihydrolipoamide succinyltransferase; E2), DLD (dihydrolipoamide dehydrogenase; E3) and the assembly factor KGD4. It contains multiple copies of the three enzymatic components (E1, E2 and E3). In the nucleus, the 2-oxoglutarate dehydrogenase complex associates with KAT2A. Interacts with PDHX. FAD is required as a cofactor. In terms of processing, tyrosine phosphorylated.

It localises to the mitochondrion matrix. Its subcellular location is the nucleus. The protein resides in the cell projection. It is found in the cilium. The protein localises to the flagellum. It localises to the cytoplasmic vesicle. Its subcellular location is the secretory vesicle. The protein resides in the acrosome. It catalyses the reaction N(6)-[(R)-dihydrolipoyl]-L-lysyl-[protein] + NAD(+) = N(6)-[(R)-lipoyl]-L-lysyl-[protein] + NADH + H(+). Functionally, lipoamide dehydrogenase is a component of the glycine cleavage system as well as an E3 component of three alpha-ketoacid dehydrogenase complexes (pyruvate-, alpha-ketoglutarate-, and branched-chain amino acid-dehydrogenase complex). The 2-oxoglutarate dehydrogenase complex is mainly active in the mitochondrion. A fraction of the 2-oxoglutarate dehydrogenase complex also localizes in the nucleus and is required for lysine succinylation of histones: associates with KAT2A on chromatin and provides succinyl-CoA to histone succinyltransferase KAT2A. In monomeric form may have additional moonlighting function as serine protease. Involved in the hyperactivation of spermatazoa during capacitation and in the spermatazoal acrosome reaction. The polypeptide is Dihydrolipoyl dehydrogenase, mitochondrial (DLD) (Bos taurus (Bovine)).